The following is a 651-amino-acid chain: Probable potassium transport system protein Kup (651 aa).

Transmembrane regions (helical) follow at residues 41 to 61 (LVLG…IYAF), 82 to 102 (VVSL…VLFV), 130 to 150 (LILG…VITP), 163 to 183 (IVAP…LVTL), 194 to 214 (VAIV…ASGL), 235 to 255 (FLTV…LAMT), 276 to 296 (WLWI…AFIL), 309 to 329 (MIPS…TVIA), 366 to 386 (IYIP…VLGF), 395 to 415 (AYGI…YIVM), 426 to 446 (ALPI…ANII), and 450 to 470 (EGGW…WTWV).

The protein belongs to the HAK/KUP transporter (TC 2.A.72) family.

The protein localises to the cell inner membrane. The enzyme catalyses K(+)(in) + H(+)(in) = K(+)(out) + H(+)(out). In terms of biological role, transport of potassium into the cell. Likely operates as a K(+):H(+) symporter. The protein is Probable potassium transport system protein Kup of Brucella canis (strain ATCC 23365 / NCTC 10854 / RM-666).